The chain runs to 125 residues: Protein ApaG (125 aa).

The 125-residue stretch at M1–H125 folds into the ApaG domain.

This chain is Protein ApaG, found in Klebsiella pneumoniae (strain 342).